The sequence spans 337 residues: Nucleoid-associated protein HSM_0096 (337 aa).

This sequence belongs to the YejK family.

The protein resides in the cytoplasm. Its subcellular location is the nucleoid. The chain is Nucleoid-associated protein HSM_0096 from Histophilus somni (strain 2336) (Haemophilus somnus).